Consider the following 318-residue polypeptide: Elongation factor Ts, mitochondrial (318 aa).

A mitochondrion-targeting transit peptide spans Met1 to Tyr18.

It belongs to the EF-Ts family.

Its subcellular location is the mitochondrion. In terms of biological role, associates with the EF-Tu.GDP complex and induces the exchange of GDP to GTP. It remains bound to the aminoacyl-tRNA.EF-Tu.GTP complex up to the GTP hydrolysis stage on the ribosome. The sequence is that of Elongation factor Ts, mitochondrial from Drosophila melanogaster (Fruit fly).